The primary structure comprises 89 residues: MALSLERKGEIIKTYQIHENDTGSPEVQIAILTERINYLNEHLKINSKDHHSRRGLLKMVGQRRSLLDYLKKKDFERYRSIVTRLGLRR.

It belongs to the universal ribosomal protein uS15 family. In terms of assembly, part of the 30S ribosomal subunit. Forms a bridge to the 50S subunit in the 70S ribosome, contacting the 23S rRNA.

Its function is as follows. One of the primary rRNA binding proteins, it binds directly to 16S rRNA where it helps nucleate assembly of the platform of the 30S subunit by binding and bridging several RNA helices of the 16S rRNA. Functionally, forms an intersubunit bridge (bridge B4) with the 23S rRNA of the 50S subunit in the ribosome. The polypeptide is Small ribosomal subunit protein uS15 (Syntrophomonas wolfei subsp. wolfei (strain DSM 2245B / Goettingen)).